The chain runs to 142 residues: DNA-directed RNA polymerase II subunit RPB4 (142 aa).

The protein belongs to the eukaryotic RPB4 RNA polymerase subunit family. Component of the RNA polymerase II (Pol II) core complex consisting of 12 subunits: a ten-subunit catalytic core composed of POLR2A/RPB1, POLR2B/RPB2, POLR2C/RPB3, POLR2I/RPB9, POLR2J/RPB11, POLR2E/RPABC1, POLR2F/RPABC2, POLR2H/RPABC3, POLR2K/RPABC4 and POLR2L/RPABC5 and a mobile stalk composed of two subunits POLR2D/RPB4 and POLR2G/RPB7, protruding from the core and functioning primarily in transcription initiation. Part of Pol II(G) complex, in which Pol II core associates with an additional subunit POLR2M; unlike conventional Pol II, Pol II(G) functions as a transcriptional repressor. Part of Pol II pre-initiation complex (PIC), in which Pol II core assembles with Mediator, general transcription factors and other specific initiation factors including GTF2E1, GTF2E2, GTF2F1, GTF2F2, TCEA1, ERCC2, ERCC3, GTF2H2, GTF2H3, GTF2H4, GTF2H5, GTF2A1, GTF2A2, GTF2B and TBP; this large multi-subunit PIC complex mediates DNA unwinding and targets Pol II core to the transcription start site where the first phosphodiester bond forms.

It localises to the nucleus. Its function is as follows. Core component of RNA polymerase II (Pol II), a DNA-dependent RNA polymerase which synthesizes mRNA precursors and many functional non-coding RNAs using the four ribonucleoside triphosphates as substrates. Pol II is the central component of the basal RNA polymerase II transcription machinery. It is composed of mobile elements that move relative to each other. POLR2D/RPB4 is part of a subcomplex with POLR2G/RPB7 that binds to a pocket formed by POLR2A/RPB1, POLR2B/RPB2 and POLR2F/RPABC2 at the base of the clamp element. The POLR2D/RPB4-POLR2G/RPB7 subcomplex seems to lock the clamp via POLR2G/RPB7 in the closed conformation thus preventing double-stranded DNA to enter the active site cleft. The POLR2D/RPB4-POLR2G/RPB7 subcomplex binds single-stranded DNA and RNA. The polypeptide is DNA-directed RNA polymerase II subunit RPB4 (POLR2D) (Bos taurus (Bovine)).